The sequence spans 187 residues: Potassium-transporting ATPase KdpC subunit (187 aa).

The chain crosses the membrane as a helical span at residues 10-30 (LVAATMLICVAGYSAAVWAVG).

It belongs to the KdpC family. As to quaternary structure, the system is composed of three essential subunits: KdpA, KdpB and KdpC.

It is found in the cell inner membrane. In terms of biological role, part of the high-affinity ATP-driven potassium transport (or Kdp) system, which catalyzes the hydrolysis of ATP coupled with the electrogenic transport of potassium into the cytoplasm. This subunit acts as a catalytic chaperone that increases the ATP-binding affinity of the ATP-hydrolyzing subunit KdpB by the formation of a transient KdpB/KdpC/ATP ternary complex. The protein is Potassium-transporting ATPase KdpC subunit of Parvibaculum lavamentivorans (strain DS-1 / DSM 13023 / NCIMB 13966).